The chain runs to 453 residues: Na(+)/H(+) antiporter NhaA (453 aa).

The next 12 membrane-spanning stretches (helical) occupy residues 27 to 47 (FLHI…AALM), 78 to 98 (LHFW…GMEI), 114 to 134 (ILPI…YFSF), 143 to 163 (GWAV…ALLG), 172 to 192 (IILL…IAFF), 201 to 221 (GLVI…IGFA), 222 to 242 (SAWL…VTGI), 249 to 269 (VILG…PLTI), 316 to 336 (PWVA…VSFA), 346 to 366 (FLIV…GIIT), 385 to 405 (WAGI…SIFV), and 421 to 441 (IGVL…GLIY).

This sequence belongs to the NhaA Na(+)/H(+) (TC 2.A.33) antiporter family.

It localises to the cell inner membrane. The enzyme catalyses Na(+)(in) + 2 H(+)(out) = Na(+)(out) + 2 H(+)(in). Na(+)/H(+) antiporter that extrudes sodium in exchange for external protons. The protein is Na(+)/H(+) antiporter NhaA of Bartonella henselae (strain ATCC 49882 / DSM 28221 / CCUG 30454 / Houston 1) (Rochalimaea henselae).